A 295-amino-acid chain; its full sequence is sn-glycerol-3-phosphate transport system permease protein UgpA (295 aa).

Over 1-11 (MSSSRPVFRSR) the chain is Cytoplasmic. The helical transmembrane segment at 12 to 32 (WLPYLLVAPQLIITVIFFIWP) threads the bilayer. At 33 to 80 (AGEALWYSLQSVDPFGFSSQFVGLDNFVTLFHDSYYLDAFWTTIKFST) the chain is on the periplasmic side. The ABC transmembrane type-1 domain maps to 76-284 (IKFSTFVTVS…FLVIVLTVVQ (209 aa)). The helical transmembrane segment at 81 to 101 (FVTVSGLLVSLFFAALVEYIV) threads the bilayer. At 102 to 109 (RGSRFYQT) the chain is on the cytoplasmic side. The chain crosses the membrane as a helical span at residues 110–130 (LMLLPYAVAPAVAAVLWIFLF). Residues 131 to 156 (NPGRGLITHFLAEFGYDWNHAQNSGQ) are Periplasmic-facing. Residues 157-177 (AMFLVVFASVWKQISYNFLFF) form a helical membrane-spanning segment. The Cytoplasmic segment spans residues 178–207 (YAALQSIPRSLIEAAAIDGAGPIRRFFKIA). The helical transmembrane segment at 208 to 228 (LPLIAPVSFFLLVVNLVYAFF) threads the bilayer. Topologically, residues 229–262 (DTFPVIDAATSGGPVQATTTLIYKIYREGFTGLD) are periplasmic. Residues 263 to 283 (LASSAAQSVVLMFLVIVLTVV) traverse the membrane as a helical segment. Over 284–295 (QFRYVEGKVRYQ) the chain is Cytoplasmic.

This sequence belongs to the binding-protein-dependent transport system permease family. UgpAE subfamily. The complex is composed of two ATP-binding proteins (UgpC), two transmembrane proteins (UgpA and UgpE) and a solute-binding protein (UgpB).

It is found in the cell inner membrane. Its function is as follows. Part of the ABC transporter complex UgpBAEC involved in sn-glycerol-3-phosphate (G3P) import. Probably responsible for the translocation of the substrate across the membrane. This Escherichia coli O6:K15:H31 (strain 536 / UPEC) protein is sn-glycerol-3-phosphate transport system permease protein UgpA (ugpA).